Reading from the N-terminus, the 127-residue chain is Small ribosomal subunit protein uS11 (127 aa).

It belongs to the universal ribosomal protein uS11 family. Part of the 30S ribosomal subunit. Interacts with proteins S7 and S18. Binds to IF-3.

Located on the platform of the 30S subunit, it bridges several disparate RNA helices of the 16S rRNA. Forms part of the Shine-Dalgarno cleft in the 70S ribosome. The polypeptide is Small ribosomal subunit protein uS11 (Chlorobium limicola (strain DSM 245 / NBRC 103803 / 6330)).